The primary structure comprises 479 residues: Ribosomal RNA small subunit methyltransferase F (479 aa).

S-adenosyl-L-methionine-binding positions include 125-131 (AAAPGSK), Glu-149, Asp-176, and Asp-194. Cys-247 functions as the Nucleophile in the catalytic mechanism.

This sequence belongs to the class I-like SAM-binding methyltransferase superfamily. RsmB/NOP family.

It is found in the cytoplasm. The catalysed reaction is cytidine(1407) in 16S rRNA + S-adenosyl-L-methionine = 5-methylcytidine(1407) in 16S rRNA + S-adenosyl-L-homocysteine + H(+). Functionally, specifically methylates the cytosine at position 1407 (m5C1407) of 16S rRNA. The chain is Ribosomal RNA small subunit methyltransferase F from Escherichia coli (strain UTI89 / UPEC).